A 93-amino-acid chain; its full sequence is Large ribosomal subunit protein uL23cz/uL23cy (93 aa).

This sequence belongs to the universal ribosomal protein uL23 family. In terms of assembly, part of the 50S ribosomal subunit.

It is found in the plastid. It localises to the chloroplast. Binds to 23S rRNA. This is Large ribosomal subunit protein uL23cz/uL23cy (rpl23-A) from Eucalyptus globulus subsp. globulus (Tasmanian blue gum).